Reading from the N-terminus, the 158-residue chain is Small ribosomal subunit protein uS7 (158 aa).

The protein belongs to the universal ribosomal protein uS7 family. As to quaternary structure, part of the 30S ribosomal subunit. Contacts proteins S9 and S11.

One of the primary rRNA binding proteins, it binds directly to 16S rRNA where it nucleates assembly of the head domain of the 30S subunit. Is located at the subunit interface close to the decoding center, probably blocks exit of the E-site tRNA. This chain is Small ribosomal subunit protein uS7, found in Azobacteroides pseudotrichonymphae genomovar. CFP2.